The sequence spans 199 residues: Dephospho-CoA kinase (199 aa).

The region spanning 4-199 is the DPCK domain; the sequence is VIGLTGGIAS…DNVLQKWNIS (196 aa). Residue 12–17 participates in ATP binding; the sequence is ASGKST.

This sequence belongs to the CoaE family.

It is found in the cytoplasm. It catalyses the reaction 3'-dephospho-CoA + ATP = ADP + CoA + H(+). It participates in cofactor biosynthesis; coenzyme A biosynthesis; CoA from (R)-pantothenate: step 5/5. Its function is as follows. Catalyzes the phosphorylation of the 3'-hydroxyl group of dephosphocoenzyme A to form coenzyme A. The chain is Dephospho-CoA kinase from Oceanobacillus iheyensis (strain DSM 14371 / CIP 107618 / JCM 11309 / KCTC 3954 / HTE831).